A 187-amino-acid chain; its full sequence is Large ribosomal subunit protein uL6 (187 aa).

A disordered region spans residues 151–170 (EAARIRSLRPPEPYKGKGIK).

Belongs to the universal ribosomal protein uL6 family. Part of the 50S ribosomal subunit.

Functionally, this protein binds to the 23S rRNA, and is important in its secondary structure. It is located near the subunit interface in the base of the L7/L12 stalk, and near the tRNA binding site of the peptidyltransferase center. In Chloroflexus aurantiacus (strain ATCC 29366 / DSM 635 / J-10-fl), this protein is Large ribosomal subunit protein uL6.